Here is a 194-residue protein sequence, read N- to C-terminus: Probable GTP-binding protein EngB (194 aa).

Positions 22–194 (GKPEIALVGR…EVWHWIEQHI (173 aa)) constitute an EngB-type G domain. Residues 30–37 (GRSNVGKS), 57–61 (GKTQT), 75–78 (DVPG), 142–145 (TKSD), and 175–177 (FSS) contribute to the GTP site. Positions 37 and 59 each coordinate Mg(2+).

This sequence belongs to the TRAFAC class TrmE-Era-EngA-EngB-Septin-like GTPase superfamily. EngB GTPase family. The cofactor is Mg(2+).

In terms of biological role, necessary for normal cell division and for the maintenance of normal septation. The chain is Probable GTP-binding protein EngB from Leuconostoc mesenteroides subsp. mesenteroides (strain ATCC 8293 / DSM 20343 / BCRC 11652 / CCM 1803 / JCM 6124 / NCDO 523 / NBRC 100496 / NCIMB 8023 / NCTC 12954 / NRRL B-1118 / 37Y).